The primary structure comprises 76 residues: Beta-defensin 121 (76 aa).

Positions 1–15 are cleaved as a signal peptide; it reads MKLLLLLLTVTLLLA. Disulfide bonds link cysteine 23-cysteine 50, cysteine 30-cysteine 44, and cysteine 34-cysteine 51.

The protein belongs to the beta-defensin family. Abundant expression in the male reproductive tract only.

The protein localises to the secreted. In terms of biological role, has antibacterial activity. This chain is Beta-defensin 121 (DEFB121), found in Macaca mulatta (Rhesus macaque).